An 881-amino-acid chain; its full sequence is Alanine--tRNA ligase (881 aa).

Zn(2+)-binding residues include histidine 564, histidine 568, cysteine 666, and histidine 670.

The protein belongs to the class-II aminoacyl-tRNA synthetase family. Requires Zn(2+) as cofactor.

It is found in the cytoplasm. It catalyses the reaction tRNA(Ala) + L-alanine + ATP = L-alanyl-tRNA(Ala) + AMP + diphosphate. In terms of biological role, catalyzes the attachment of alanine to tRNA(Ala) in a two-step reaction: alanine is first activated by ATP to form Ala-AMP and then transferred to the acceptor end of tRNA(Ala). Also edits incorrectly charged Ser-tRNA(Ala) and Gly-tRNA(Ala) via its editing domain. This is Alanine--tRNA ligase from Caldicellulosiruptor saccharolyticus (strain ATCC 43494 / DSM 8903 / Tp8T 6331).